Here is a 257-residue protein sequence, read N- to C-terminus: UPF0246 protein Ssed_1188 (257 aa).

Belongs to the UPF0246 family.

This chain is UPF0246 protein Ssed_1188, found in Shewanella sediminis (strain HAW-EB3).